The chain runs to 359 residues: Glycerol-3-phosphate dehydrogenase [NAD(P)+] (359 aa).

4 residues coordinate NADPH: Thr11, Trp12, Arg32, and Lys107. 2 residues coordinate sn-glycerol 3-phosphate: Lys107 and Gly138. Position 142 (Ala142) interacts with NADPH. Lys193, Asp246, Ser256, Arg257, and Asn258 together coordinate sn-glycerol 3-phosphate. Lys193 functions as the Proton acceptor in the catalytic mechanism. NADPH is bound at residue Arg257. Positions 281 and 283 each coordinate NADPH.

This sequence belongs to the NAD-dependent glycerol-3-phosphate dehydrogenase family.

It is found in the cytoplasm. It carries out the reaction sn-glycerol 3-phosphate + NAD(+) = dihydroxyacetone phosphate + NADH + H(+). The catalysed reaction is sn-glycerol 3-phosphate + NADP(+) = dihydroxyacetone phosphate + NADPH + H(+). It participates in membrane lipid metabolism; glycerophospholipid metabolism. Catalyzes the reduction of the glycolytic intermediate dihydroxyacetone phosphate (DHAP) to sn-glycerol 3-phosphate (G3P), the key precursor for phospholipid synthesis. This chain is Glycerol-3-phosphate dehydrogenase [NAD(P)+], found in Dehalococcoides mccartyi (strain CBDB1).